We begin with the raw amino-acid sequence, 178 residues long: Large ribosomal subunit protein uL6 (178 aa).

The protein belongs to the universal ribosomal protein uL6 family. In terms of assembly, part of the 50S ribosomal subunit.

Its function is as follows. This protein binds to the 23S rRNA, and is important in its secondary structure. It is located near the subunit interface in the base of the L7/L12 stalk, and near the tRNA binding site of the peptidyltransferase center. The chain is Large ribosomal subunit protein uL6 from Streptococcus pneumoniae (strain 70585).